Reading from the N-terminus, the 413-residue chain is Protein FAM8A1 (413 aa).

The segment covering 1-10 has biased composition (basic and acidic residues); sequence MAEGPEEARG. The segment at 1–105 is disordered; the sequence is MAEGPEEARG…PEAAAPRERP (105 aa). Positions 49–64 are enriched in low complexity; it reads APGRPTAPGLAAAAAA. The span at 65 to 78 shows a compositional bias: basic and acidic residues; that stretch reads DKLEPPRELRKRGE. Residues 107–139 are necessary and sufficient to interact with SYVN1; sequence RLSAREYSRQVHEWLWQSYCGYLTWHSGLAAFP. The disordered stretch occupies residues 217-236; that stretch reads PVTRVGSAAPSRSPSETGRQ. A Phosphoserine modification is found at S229. In terms of domain architecture, RDD spans 242–408; sequence VIPSLAHRFM…DIVAGTIVVK (167 aa). 3 consecutive transmembrane segments (helical) span residues 257-277, 304-324, and 371-391; these read FFIL…LSGI, MMVV…ICIW, and ALIK…LLFF.

In terms of assembly, component of the HRD1 complex, which comprises at least SYNV1/HRD1, FAM8A1, HERPUD1/HERP, OS9, SEL1L and UBE2J1. This interaction stabilizes FAM8A1 protein, preventing its proteasomal degradation. FAM8A1 binding to SYNV1 may promote recruitment of HERPUD1 to the HRD1 complex. As to expression, ubiquitously expressed, with a higher level of expression in testis.

It is found in the membrane. Its function is as follows. Plays a role in the assembly of the HRD1 complex, a complex involved in the ubiquitin-proteasome-dependent process of ER-associated degradation (ERAD). The polypeptide is Protein FAM8A1 (FAM8A1) (Homo sapiens (Human)).